Reading from the N-terminus, the 73-residue chain is Eukaryotic translation initiation factor 4 gamma 2 (73 aa).

The 70-residue stretch at 1-70 (QVHCYNSNFP…ETAEEEESEE (70 aa)) folds into the W2 domain.

This sequence belongs to the eukaryotic initiation factor 4G family. As to quaternary structure, interacts with the serine/threonine protein kinases MKNK1 and MKNK2. Binds EIF4A and EIF3. Post-translationally, phosphorylation; hyperphosphorylated during mitosis.

Appears to play a role in the switch from cap-dependent to IRES-mediated translation during mitosis, apoptosis and viral infection. Cleaved by some caspases and viral proteases. The polypeptide is Eukaryotic translation initiation factor 4 gamma 2 (EIF4G2) (Gallus gallus (Chicken)).